A 237-amino-acid chain; its full sequence is Probable septum site-determining protein MinC (237 aa).

It belongs to the MinC family. In terms of assembly, interacts with MinD and FtsZ.

In terms of biological role, cell division inhibitor that blocks the formation of polar Z ring septums. Rapidly oscillates between the poles of the cell to destabilize FtsZ filaments that have formed before they mature into polar Z rings. Prevents FtsZ polymerization. The polypeptide is Probable septum site-determining protein MinC (Neisseria gonorrhoeae).